A 357-amino-acid chain; its full sequence is Phosphoribosylformylglycinamidine cyclo-ligase (357 aa).

It belongs to the AIR synthase family.

It localises to the cytoplasm. It carries out the reaction 2-formamido-N(1)-(5-O-phospho-beta-D-ribosyl)acetamidine + ATP = 5-amino-1-(5-phospho-beta-D-ribosyl)imidazole + ADP + phosphate + H(+). It participates in purine metabolism; IMP biosynthesis via de novo pathway; 5-amino-1-(5-phospho-D-ribosyl)imidazole from N(2)-formyl-N(1)-(5-phospho-D-ribosyl)glycinamide: step 2/2. This Rhizobium johnstonii (strain DSM 114642 / LMG 32736 / 3841) (Rhizobium leguminosarum bv. viciae) protein is Phosphoribosylformylglycinamidine cyclo-ligase.